Reading from the N-terminus, the 504-residue chain is Maturase K (504 aa).

Belongs to the intron maturase 2 family. MatK subfamily.

The protein localises to the plastid. It localises to the chloroplast. Its function is as follows. Usually encoded in the trnK tRNA gene intron. Probably assists in splicing its own and other chloroplast group II introns. In Quercus robur (English oak), this protein is Maturase K.